Consider the following 411-residue polypeptide: Adenylosuccinate synthetase (411 aa).

GTP is bound by residues 11–17 (GDEGKGK) and 39–41 (GHT). The active-site Proton acceptor is the D12. Positions 12 and 39 each coordinate Mg(2+). IMP contacts are provided by residues 12–15 (DEGK), 37–40 (NAGH), T121, R135, Q215, T230, and R294. H40 functions as the Proton donor in the catalytic mechanism. 290-296 (TTTKRPR) serves as a coordination point for substrate. Residues R296, 322-324 (KLD), and 400-402 (STS) each bind GTP.

It belongs to the adenylosuccinate synthetase family. As to quaternary structure, homodimer. The cofactor is Mg(2+).

The protein resides in the cytoplasm. It carries out the reaction IMP + L-aspartate + GTP = N(6)-(1,2-dicarboxyethyl)-AMP + GDP + phosphate + 2 H(+). The protein operates within purine metabolism; AMP biosynthesis via de novo pathway; AMP from IMP: step 1/2. Its function is as follows. Plays an important role in the de novo pathway of purine nucleotide biosynthesis. Catalyzes the first committed step in the biosynthesis of AMP from IMP. The chain is Adenylosuccinate synthetase from Helicobacter pylori (strain Shi470).